We begin with the raw amino-acid sequence, 228 residues long: MSYSNAYAPSAPELPESFVQQQHDGESRYTYAYPSYQPTQQFSSYSGMFSPETHPEIVRSFESADRNRSGFLEESELRQALSLSGYDGISNRTIRLLLFIYKIPVDSLLRLGPKEYVELWNCLAQWRAIFNRYDRDRSGKMNSTQLRDAFYNLGCVLPTSVHQLIVSQFDDGTGKTVDLCFDSFLECGMIVKGLTEKFRENDPGYTGYATLSYDVFMLMVIPFIATYD.

2 consecutive EF-hand domains span residues 52–87 and 121–156; these read ETHPEIVRSFESADRNRSGFLEESELRQALSLSGYD and NCLAQWRAIFNRYDRDRSGKMNSTQLRDAFYNLGCV. 4 residues coordinate Ca(2+): aspartate 65, asparagine 67, serine 69, and glutamate 76.

Potential calcium sensor. This Arabidopsis thaliana (Mouse-ear cress) protein is Probable calcium-binding protein CML48 (CML48).